Consider the following 355-residue polypeptide: UDP-N-acetylglucosamine--N-acetylmuramyl-(pentapeptide) pyrophosphoryl-undecaprenol N-acetylglucosamine transferase (355 aa).

Residues 15–17, N127, R163, S191, I244, 263–268, and Q288 contribute to the UDP-N-acetyl-alpha-D-glucosamine site; these read TGG and ALTVSE.

The protein belongs to the glycosyltransferase 28 family. MurG subfamily.

The protein localises to the cell inner membrane. It carries out the reaction di-trans,octa-cis-undecaprenyl diphospho-N-acetyl-alpha-D-muramoyl-L-alanyl-D-glutamyl-meso-2,6-diaminopimeloyl-D-alanyl-D-alanine + UDP-N-acetyl-alpha-D-glucosamine = di-trans,octa-cis-undecaprenyl diphospho-[N-acetyl-alpha-D-glucosaminyl-(1-&gt;4)]-N-acetyl-alpha-D-muramoyl-L-alanyl-D-glutamyl-meso-2,6-diaminopimeloyl-D-alanyl-D-alanine + UDP + H(+). It functions in the pathway cell wall biogenesis; peptidoglycan biosynthesis. Its function is as follows. Cell wall formation. Catalyzes the transfer of a GlcNAc subunit on undecaprenyl-pyrophosphoryl-MurNAc-pentapeptide (lipid intermediate I) to form undecaprenyl-pyrophosphoryl-MurNAc-(pentapeptide)GlcNAc (lipid intermediate II). This chain is UDP-N-acetylglucosamine--N-acetylmuramyl-(pentapeptide) pyrophosphoryl-undecaprenol N-acetylglucosamine transferase, found in Salmonella paratyphi B (strain ATCC BAA-1250 / SPB7).